Reading from the N-terminus, the 667-residue chain is E3 ubiquitin-protein ligase Midline-1 (667 aa).

The segment at C10–R60 adopts an RING-type zinc-finger fold. Residues S92 and S96 each carry the phosphoserine modification. B box-type zinc fingers lie at residues K116 to I165 and G172 to L212. 12 residues coordinate Zn(2+): C119, C122, C134, C137, C142, C145, H150, H159, C175, H178, C198, and H204. Residues R205–E264 are a coiled coil. The 60-residue stretch at L320 to L379 folds into the COS domain. A Fibronectin type-III domain is found at A381–Q484. The span at S471–P485 shows a compositional bias: polar residues. The interval S471–S524 is disordered. The 178-residue stretch at N482–H659 folds into the B30.2/SPRY domain. The segment covering V499–E520 has biased composition (basic and acidic residues). Residue S511 is modified to Phosphoserine.

The protein belongs to the TRIM/RBCC family. In terms of assembly, homodimer or heterodimer with MID2. Interacts with IGBP1. Interacts with TRIM16. In terms of processing, phosphorylated on serine and threonine residues. As to expression, in the fetus, highest expression found in kidney, followed by brain and lung. Expressed at low levels in fetal liver. In the adult, most abundant in heart, placenta and brain.

It is found in the cytoplasm. The protein resides in the cytoskeleton. It localises to the spindle. It catalyses the reaction S-ubiquitinyl-[E2 ubiquitin-conjugating enzyme]-L-cysteine + [acceptor protein]-L-lysine = [E2 ubiquitin-conjugating enzyme]-L-cysteine + N(6)-ubiquitinyl-[acceptor protein]-L-lysine.. Has E3 ubiquitin ligase activity towards IGBP1, promoting its monoubiquitination, which results in deprotection of the catalytic subunit of protein phosphatase PP2A, and its subsequent degradation by polyubiquitination. The chain is E3 ubiquitin-protein ligase Midline-1 (MID1) from Homo sapiens (Human).